The chain runs to 448 residues: Multiple inositol polyphosphate phosphatase 1 (448 aa).

Residues 1 to 19 form the signal peptide; that stretch reads MAPRRAACLLPLLVAVASA. Residue histidine 69 is part of the active site. Residues asparagine 203, asparagine 257, asparagine 409, and asparagine 441 are each glycosylated (N-linked (GlcNAc...) asparagine). The short motif at 445 to 448 is the Prevents secretion from ER element; sequence ADEL.

This sequence belongs to the histidine acid phosphatase family. MINPP1 subfamily. Post-translationally, N-glycosylated. As to expression, present in growth plate chondrocytes but not detectable in articular chondrocytes (at protein level). Spatially restricted to chondrocytes in the lower portion of the proliferative zone and the upper portion of the hypertrophic zone in the growth plate of long bones (at protein level). Weakly expressed in kidney, liver, lung, skin and spleen, and not detected in brain, heart and muscle.

Its subcellular location is the endoplasmic reticulum lumen. It localises to the secreted. It is found in the cell membrane. The catalysed reaction is 1D-myo-inositol hexakisphosphate + H2O = 1D-myo-inositol 1,2,4,5,6-pentakisphosphate + phosphate. It carries out the reaction 1D-myo-inositol 1,2,4,5,6-pentakisphosphate + H2O = 1D-myo-inositol 1,2,5,6-tetrakisphosphate + phosphate. It catalyses the reaction 1D-myo-inositol 1,2,5,6-tetrakisphosphate + H2O = 1D-myo-inositol 1,2,6-trisphosphate + phosphate. The enzyme catalyses 1D-myo-inositol 1,2,6-trisphosphate + H2O = 1D-myo-inositol 1,2-bisphosphate + phosphate. The catalysed reaction is 1D-myo-inositol 1,2-bisphosphate + H2O = 1D-myo-inositol 2-phosphate + phosphate. It carries out the reaction 1D-myo-inositol hexakisphosphate + H2O = 1D-myo-inositol 1,2,3,5,6-pentakisphosphate + phosphate. It catalyses the reaction 1D-myo-inositol 1,2,3,5,6-pentakisphosphate + H2O = 1D-myo-inositol 1,2,3,6-tetrakisphosphate + phosphate. The enzyme catalyses 1D-myo-inositol 1,2,3,6-tetrakisphosphate + H2O = 1D-myo-inositol 1,2,3-trisphosphate + phosphate. The catalysed reaction is 1D-myo-inositol 1,2,3-trisphosphate + H2O = 1D-myo-inositol 2,3-bisphosphate + phosphate. It carries out the reaction 1D-myo-inositol 2,3-bisphosphate + H2O = 1D-myo-inositol 2-phosphate + phosphate. It catalyses the reaction 1D-myo-inositol 1,3,4,5,6-pentakisphosphate + H2O = 1D-myo-inositol 1,4,5,6-tetrakisphosphate + phosphate. The enzyme catalyses 1D-myo-inositol 1,4,5,6-tetrakisphosphate + H2O = 1D-myo-inositol 1,4,5-trisphosphate + phosphate. The catalysed reaction is (2R)-2,3-bisphosphoglycerate + H2O = (2R)-2-phosphoglycerate + phosphate. In terms of biological role, multiple inositol polyphosphate phosphatase that hydrolyzes 1D-myo-inositol 1,3,4,5,6-pentakisphosphate (InsP5[2OH]) and 1D-myo-inositol hexakisphosphate (InsP6) to a range of less phosphorylated inositol phosphates. This regulates the availability of these various small molecule second messengers and metal chelators which control many aspects of cell physiology. Has a weak in vitro activity towards 1D-myo-inositol 1,4,5-trisphosphate which is unlikely to be physiologically relevant. By regulating intracellular inositol polyphosphates pools, which act as metal chelators, it may control the availability of intracellular calcium and iron, which are important for proper neuronal development and homeostasis. May have a dual substrate specificity, and function as a 2,3-bisphosphoglycerate 3-phosphatase hydrolyzing 2,3-bisphosphoglycerate to 2-phosphoglycerate. 2,3-bisphosphoglycerate (BPG) is formed as part of the Rapoport-Luebering glycolytic bypass and is a regulator of systemic oxygen homeostasis as the major allosteric effector of hemoglobin. The chain is Multiple inositol polyphosphate phosphatase 1 (MINPP1) from Gallus gallus (Chicken).